We begin with the raw amino-acid sequence, 499 residues long: Hexokinase-2, chloroplastic (499 aa).

The transit peptide at 1–30 directs the protein to the chloroplast; sequence MSVTVSSPAGRSFHISRSPYKKISKPRVII. Residues 39–490 enclose the Hexokinase domain; the sequence is LAVAPILTKL…SGIGAALLAA (452 aa). The segment at 94 to 232 is hexokinase small subdomain; that stretch reads TGNEKGLFYA…GLGMQVSALV (139 aa). ADP contacts are provided by Gly108, Thr109, and Asn110. D-glucose-binding residues include Thr198, Lys199, Asn233, and Asp234. Positions 233–479 are hexokinase large subdomain; it reads NDTVATLAGA…KNVVIEHSKD (247 aa). Residue Thr257 coordinates ADP. D-glucose contacts are provided by Asn260, Glu288, and Glu318. An ADP-binding site is contributed by Gly444.

It belongs to the hexokinase family. Expressed in vascular starch sheath, xylem parenchyma, guard cells and root tips.

The protein localises to the plastid. It localises to the chloroplast stroma. The enzyme catalyses a D-hexose + ATP = a D-hexose 6-phosphate + ADP + H(+). It catalyses the reaction D-fructose + ATP = D-fructose 6-phosphate + ADP + H(+). It carries out the reaction D-glucose + ATP = D-glucose 6-phosphate + ADP + H(+). It participates in carbohydrate metabolism; hexose metabolism. It functions in the pathway carbohydrate degradation; glycolysis; D-glyceraldehyde 3-phosphate and glycerone phosphate from D-glucose: step 1/4. In terms of biological role, fructose and glucose phosphorylating enzyme. This chain is Hexokinase-2, chloroplastic (HXK2), found in Nicotiana tabacum (Common tobacco).